The sequence spans 399 residues: MRLTQMPSEFQKALPVLEKIKEAGFEAYFVGGSVRDALLHNPIHDVDIATSSYPEETKQIFPRTADIGIEHGTVLVLDGDEEYEVTTFRTEDVYVDYRRPSAVSFVRSLEEDLKRRDFTVNAFALDETGEIVDLFHGLEDLEKQVLRAVGVASERFNEDALRIMRGFRFQASLGFALEPETFKAMKTLTPLLENISVERTFVEFDKLLLAPFWRRGLASMIESQAYDYLPDMASSQDKLNRLFDLETDFTFESSEQAWAALLWALEIENAQSFLKSWKTSRQFAKQVQDLLIILALRENGELSKRDCYRFDIDLLLQAENLRQAQGKEVNPQAITEKYQSLTIHDKKEIQINGGILIKEYGYQPGPDLGEILTEIEFAIVDGELENNREAIHAYLREKK.

Gly32 and Arg35 together coordinate ATP. CTP is bound by residues Gly32 and Arg35. The Mg(2+) site is built by Asp45 and Asp47. Residues Arg116, Asp159, Arg162, Arg165, and Arg168 each contribute to the ATP site. CTP-binding residues include Arg116, Asp159, Arg162, Arg165, and Arg168.

Belongs to the tRNA nucleotidyltransferase/poly(A) polymerase family. Bacterial CCA-adding enzyme type 3 subfamily. Homodimer. Mg(2+) serves as cofactor.

It carries out the reaction a tRNA precursor + 2 CTP + ATP = a tRNA with a 3' CCA end + 3 diphosphate. The catalysed reaction is a tRNA with a 3' CCA end + 2 CTP + ATP = a tRNA with a 3' CCACCA end + 3 diphosphate. Catalyzes the addition and repair of the essential 3'-terminal CCA sequence in tRNAs without using a nucleic acid template. Adds these three nucleotides in the order of C, C, and A to the tRNA nucleotide-73, using CTP and ATP as substrates and producing inorganic pyrophosphate. tRNA 3'-terminal CCA addition is required both for tRNA processing and repair. Also involved in tRNA surveillance by mediating tandem CCA addition to generate a CCACCA at the 3' terminus of unstable tRNAs. While stable tRNAs receive only 3'-terminal CCA, unstable tRNAs are marked with CCACCA and rapidly degraded. In Streptococcus pneumoniae serotype 19F (strain G54), this protein is CCA-adding enzyme.